Reading from the N-terminus, the 458-residue chain is GTPase Der (458 aa).

2 consecutive EngA-type G domains span residues 4 to 169 (PSIA…PKDF) and 178 to 353 (VMMS…TQHR). GTP is bound by residues 10 to 17 (GRPNVGKS), 57 to 61 (DTGGL), 120 to 123 (NKCE), 184 to 191 (GRPNVGKS), 231 to 235 (DTAGI), and 296 to 299 (NKWD). Residues 354–439 (MRVTTSVVNE…PIILLWRGKQ (86 aa)) form the KH-like domain.

This sequence belongs to the TRAFAC class TrmE-Era-EngA-EngB-Septin-like GTPase superfamily. EngA (Der) GTPase family. In terms of assembly, associates with the 50S ribosomal subunit.

Its function is as follows. GTPase that plays an essential role in the late steps of ribosome biogenesis. This Prochlorococcus marinus (strain MIT 9515) protein is GTPase Der.